A 506-amino-acid polypeptide reads, in one-letter code: Protein MGF 505-9R (506 aa).

ANK repeat units follow at residues 54-83, 253-283, and 313-343; these read PTHKAVQIAASEGNEDIVKLFLLWKGSLQY, QVDTVLFQAVKYNHRKILAHFIHEIPRETVE, and FVKKLLHAVVKHKYMLIIKLLLERPKKKINL.

Belongs to the asfivirus MGF 505 family.

Functionally, plays a role in virus cell tropism, and may be required for efficient virus replication in macrophages. This chain is Protein MGF 505-9R, found in Ornithodoros (relapsing fever ticks).